The following is a 335-amino-acid chain: Avermitilol synthase (335 aa).

Aspartate 80, aspartate 84, asparagine 219, serine 223, and glutamate 227 together coordinate Mg(2+). The DDXXD motif signature appears at 80–84; it reads DDQFD.

Belongs to the terpene synthase family. The cofactor is Mg(2+).

The enzyme catalyses (2E,6E)-farnesyl diphosphate + H2O = avermitilol + diphosphate. Its function is as follows. Catalyzes the cyclization of farnesyl diphosphate to avermitilol. The chain is Avermitilol synthase (tpc1) from Streptomyces avermitilis (strain ATCC 31267 / DSM 46492 / JCM 5070 / NBRC 14893 / NCIMB 12804 / NRRL 8165 / MA-4680).